A 490-amino-acid polypeptide reads, in one-letter code: MDEPSNMSTTSSKIPQYDFYSDVDNLHPDQFRIQCLPGRNFISPLVEQKKDFVKAHVIHDKDLDIMYDPMPKGKCNISQSCLTLPLACPRVSLHFDPSKTTVAMVTCGGVCPGLNDVIRGITLAAVCSYHVKKVIGFKYGYWGLSKAGRHTAIELTSNIVRGLRHLGGTFLGTSRGGQNISDMVDTLVEYGVNILFTIGGDGTQKGAVAISEEVNRRGLDIAVFGIPKTIDNDLSFSQRTFGYETAVSEAVIAIRAAHAEAISHEYGVGIVKLMGRNSGFIAASATVASALSHICLIPEKNVSKKVLLSLIEARFMMAKDIVIVVAEGFGQDWPDCNEDLGSDASGNKRLTDIGLVIKKIVQDHLSKNPKYHQSTVKYIDPSYMIRACPASTSDAAFCSNLSTLAVHEAMAGRTACLITLWYSNFVLVPIKTAVSHRKIVSTGGALWRQVREVTVDGSGDIAMVHQQELSRELKAINAHRNSIMEQLSKL.

Residues Gly109, 175–176 (RG), and 200–203 (GDGT) contribute to the ATP site. Asp201 serves as a coordination point for Mg(2+). Substrate contacts are provided by residues 229–231 (TID), 274–276 (MGR), Glu327, and 383–386 (YMIR). Asp231 (proton acceptor) is an active-site residue. Residues 488–490 (SKL) carry the Peroxisomal targeting signal motif.

The protein belongs to the phosphofructokinase type A (PFKA) family. PPi-dependent PFK group II subfamily. Atypical ATP-dependent clade 'X' sub-subfamily. In terms of assembly, homotetramer. It depends on Mg(2+) as a cofactor.

Its subcellular location is the glycosome. It carries out the reaction beta-D-fructose 6-phosphate + ATP = beta-D-fructose 1,6-bisphosphate + ADP + H(+). It participates in carbohydrate degradation; glycolysis; D-glyceraldehyde 3-phosphate and glycerone phosphate from D-glucose: step 3/4. Its activity is regulated as follows. Allosterically activated by AMP. Functionally, catalyzes the phosphorylation of D-fructose 6-phosphate to fructose 1,6-bisphosphate by ATP, the first committing step of glycolysis. This is ATP-dependent 6-phosphofructokinase from Trypanoplasma borreli.